The sequence spans 229 residues: Uracil-DNA glycosylase (229 aa).

The Proton acceptor role is filled by D65.

This sequence belongs to the uracil-DNA glycosylase (UDG) superfamily. UNG family.

It is found in the cytoplasm. The enzyme catalyses Hydrolyzes single-stranded DNA or mismatched double-stranded DNA and polynucleotides, releasing free uracil.. Excises uracil residues from the DNA which can arise as a result of misincorporation of dUMP residues by DNA polymerase or due to deamination of cytosine. In Latilactobacillus sakei subsp. sakei (strain 23K) (Lactobacillus sakei subsp. sakei), this protein is Uracil-DNA glycosylase.